We begin with the raw amino-acid sequence, 287 residues long: Small ribosomal subunit protein uS2 (287 aa).

The disordered stretch occupies residues 233–287 (HKAPQDDIEPMAEWEKQLLQSGDSSGETRPISGTDRPLDGDLSKGPAPQDEELSD). Over residues 250-259 (LLQSGDSSGE) the composition is skewed to polar residues.

The protein belongs to the universal ribosomal protein uS2 family.

The polypeptide is Small ribosomal subunit protein uS2 (Tropheryma whipplei (strain TW08/27) (Whipple's bacillus)).